The following is a 477-amino-acid chain: Mitochondrial adenyl nucleotide antiporter SLC25A24 (477 aa).

The segment at 1–173 (MLRWLRGFVL…RFWKHSTGID (173 aa)) is regulatory N-terminal domain. Topologically, residues 1 to 197 (MLRWLRGFVL…EKKSGQWWRQ (197 aa)) are mitochondrial intermembrane. EF-hand domains follow at residues 19–54 (EPPTRYETLFQKLDRNGDGVVDISELQEGLKSLGIP), 61–85 (EKIFTTGDVNKDGKLDFEEFMKYLK), 86–121 (DHEKKMKLAFKSLDKNNDGKIEASEIVQSLQILGLT), and 122–157 (ISEQQAELILQSIDADGTMTVDWNEWRDYFLFNPVT). Positions 32, 34, 36, 38, 43, 68, 70, 72, 74, 79, 99, 101, 103, 105, 110, 135, 137, 139, 141, and 146 each coordinate Ca(2+). A linker region region spans residues 159–168 (IEEIIRFWKH). Residues 174 to 477 (IGDSLTIPDE…MKQTLGVTQK (304 aa)) form a C-terminal transmembrane transporter domain region. Solcar repeat units lie at residues 192–278 (GQWW…YKKL), 286–371 (IGTF…LKSH), and 383–471 (PGVM…MKQT). A helical transmembrane segment spans residues 198 to 215 (LLAGGVAGAVSRTSTAPL). Residues 216 to 252 (DRLKVMMQVHGSKSAKMNIYGGFQQMVKEGGIRSLWR) lie on the Mitochondrial matrix side of the membrane. Residues 253 to 272 (GNGTNVIKIAPETAVKFWAY) form a helical membrane-spanning segment. Over 273-295 (EQYKKLLTEEGQKIGTFERFVSG) the chain is Mitochondrial intermembrane. A helical transmembrane segment spans residues 296 to 309 (SMAGATAQTFIYPM). The Mitochondrial matrix portion of the chain corresponds to 310-345 (EVLKTRLAVGKTGQYSGMFDCAKKILKYEGMGAFYK). Lys320 is modified (N6-acetyllysine; alternate). The residue at position 320 (Lys320) is an N6-succinyllysine; alternate. Lys336 carries the post-translational modification N6-acetyllysine. The helical transmembrane segment at 346–365 (GYVPNLLGIIPYAGIDLAVY) threads the bilayer. The Mitochondrial intermembrane portion of the chain corresponds to 366-388 (ELLKSHWLDNFAKDSVNPGVMVL). The chain crosses the membrane as a helical span at residues 389–406 (LGCGALSSTCGQLASYPL). Topologically, residues 407–445 (ALVRTRMQAQAMIEKSPQLNMVGLFRRILSKEGLPGLYR) are mitochondrial matrix. N6-acetyllysine; alternate is present on Lys437. Lys437 is subject to N6-succinyllysine; alternate. The chain crosses the membrane as a helical span at residues 446–465 (GITPNFMKVLPAVGISYVVY). Residues 466 to 477 (ENMKQTLGVTQK) are Mitochondrial intermembrane-facing.

The protein belongs to the mitochondrial carrier (TC 2.A.29) family. In terms of assembly, monomer.

The protein resides in the mitochondrion inner membrane. The enzyme catalyses Mg(2+)(out) + phosphate(in) + ATP(out) = Mg(2+)(in) + phosphate(out) + ATP(in). The catalysed reaction is ADP(out) + phosphate(in) + H(+)(out) = ADP(in) + phosphate(out) + H(+)(in). It carries out the reaction AMP(out) + phosphate(in) = AMP(in) + phosphate(out). It catalyses the reaction phosphate(in) + ATP(out) + 2 H(+)(out) = phosphate(out) + ATP(in) + 2 H(+)(in). The enzyme catalyses dADP(in) + ADP(out) = dADP(out) + ADP(in). The catalysed reaction is Mg(2+)(in) + ADP(out) + ATP(in) + H(+)(out) = Mg(2+)(out) + ADP(in) + ATP(out) + H(+)(in). It carries out the reaction ADP(out) + diphosphate(in) = ADP(in) + diphosphate(out). It catalyses the reaction dAMP(in) + ADP(out) + H(+)(out) = dAMP(out) + ADP(in) + H(+)(in). The enzyme catalyses 3'-AMP(in) + ADP(out) + H(+)(out) = 3'-AMP(out) + ADP(in) + H(+)(in). The catalysed reaction is dAMP(out) + phosphate(in) = dAMP(in) + phosphate(out). It carries out the reaction 3'-AMP(out) + phosphate(in) = 3'-AMP(in) + phosphate(out). It catalyses the reaction dADP(out) + phosphate(in) + H(+)(out) = dADP(in) + phosphate(out) + H(+)(in). Activated by an increase in cytosolic calcium levels that induce a conformational change of the N-terminal regulatory domain, uncapping the channel and allowing transport. Inhibited by bathophenanthroline, mersalyl, p-hydroxymercuribenzoate, bromcresol purple and tannic acid. Its function is as follows. Electroneutral antiporter that mediates the transport of adenyl nucleotides through the inner mitochondrial membrane. Originally identified as an ATP-magnesium/inorganic phosphate antiporter, it also acts as a broad specificity adenyl nucleotide antiporter. By regulating the mitochondrial matrix adenyl nucleotide pool could adapt to changing cellular energetic demands and indirectly regulate adenyl nucleotide-dependent metabolic pathways. In vitro, a low activity is also observed with guanyl and pyrimidine nucleotides. May play a role in protecting cells against oxidative stress-induced cell death, by buffering calcium levels in the mitochondrial matrix through the formation of calcium-phosphate precipitates. This is Mitochondrial adenyl nucleotide antiporter SLC25A24 (SLC25A24) from Bos taurus (Bovine).